The following is a 111-amino-acid chain: ATP-dependent Clp protease adapter protein ClpS (111 aa).

It belongs to the ClpS family. As to quaternary structure, binds to the N-terminal domain of the chaperone ClpA.

Its function is as follows. Involved in the modulation of the specificity of the ClpAP-mediated ATP-dependent protein degradation. The sequence is that of ATP-dependent Clp protease adapter protein ClpS from Leptospira interrogans serogroup Icterohaemorrhagiae serovar copenhageni (strain Fiocruz L1-130).